The chain runs to 302 residues: Oxygen-dependent coproporphyrinogen-III oxidase (302 aa).

Residue Ser-94 participates in substrate binding. Positions 98 and 108 each coordinate a divalent metal cation. Residue His-108 is the Proton donor of the active site. Residue Asn-110–Arg-112 coordinates substrate. Residues His-147 and His-177 each coordinate a divalent metal cation. Residues Tyr-242 to Gln-277 form an important for dimerization region. Gly-260–Arg-262 serves as a coordination point for substrate.

Belongs to the aerobic coproporphyrinogen-III oxidase family. As to quaternary structure, homodimer. The cofactor is a divalent metal cation.

The protein localises to the cytoplasm. The catalysed reaction is coproporphyrinogen III + O2 + 2 H(+) = protoporphyrinogen IX + 2 CO2 + 2 H2O. The protein operates within porphyrin-containing compound metabolism; protoporphyrin-IX biosynthesis; protoporphyrinogen-IX from coproporphyrinogen-III (O2 route): step 1/1. In terms of biological role, involved in the heme biosynthesis. Catalyzes the aerobic oxidative decarboxylation of propionate groups of rings A and B of coproporphyrinogen-III to yield the vinyl groups in protoporphyrinogen-IX. This is Oxygen-dependent coproporphyrinogen-III oxidase from Shewanella baltica (strain OS155 / ATCC BAA-1091).